Consider the following 403-residue polypeptide: Phosphopentomutase (403 aa).

The Mn(2+) site is built by D13, D298, H303, D339, H340, and H351.

This sequence belongs to the phosphopentomutase family. Mn(2+) serves as cofactor.

It localises to the cytoplasm. It carries out the reaction 2-deoxy-alpha-D-ribose 1-phosphate = 2-deoxy-D-ribose 5-phosphate. The catalysed reaction is alpha-D-ribose 1-phosphate = D-ribose 5-phosphate. Its pathway is carbohydrate degradation; 2-deoxy-D-ribose 1-phosphate degradation; D-glyceraldehyde 3-phosphate and acetaldehyde from 2-deoxy-alpha-D-ribose 1-phosphate: step 1/2. In terms of biological role, isomerase that catalyzes the conversion of deoxy-ribose 1-phosphate (dRib-1-P) and ribose 1-phosphate (Rib-1-P) to deoxy-ribose 5-phosphate (dRib-5-P) and ribose 5-phosphate (Rib-5-P), respectively. This is Phosphopentomutase from Streptococcus pneumoniae (strain Hungary19A-6).